A 105-amino-acid chain; its full sequence is Secreted RxLR effector protein 158 (105 aa).

The first 22 residues, 1–22 (MRGAHYVAIVLLVAAGGQTAAG), serve as a signal peptide directing secretion. Positions 50 to 71 (RALQASRNPKDDLMFSAGDEER) match the RxLR-dEER motif.

The protein belongs to the RxLR effector family.

It localises to the secreted. Its subcellular location is the host nucleus. The protein resides in the host cytoplasm. In terms of biological role, secreted effector that partially suppresses the host cell death induced by cell death-inducing proteins. This chain is Secreted RxLR effector protein 158, found in Plasmopara viticola (Downy mildew of grapevine).